A 426-amino-acid polypeptide reads, in one-letter code: Glutamate-1-semialdehyde 2,1-aminomutase (426 aa).

N6-(pyridoxal phosphate)lysine is present on Lys265.

The protein belongs to the class-III pyridoxal-phosphate-dependent aminotransferase family. HemL subfamily. As to quaternary structure, homodimer. Requires pyridoxal 5'-phosphate as cofactor.

It localises to the cytoplasm. The enzyme catalyses (S)-4-amino-5-oxopentanoate = 5-aminolevulinate. It participates in porphyrin-containing compound metabolism; protoporphyrin-IX biosynthesis; 5-aminolevulinate from L-glutamyl-tRNA(Glu): step 2/2. The sequence is that of Glutamate-1-semialdehyde 2,1-aminomutase from Salmonella agona (strain SL483).